The sequence spans 214 residues: Adenylate kinase (214 aa).

An ATP-binding site is contributed by 10 to 15; the sequence is GAGKGT. The NMP stretch occupies residues 30 to 59; that stretch reads STGDMLRAAVKAGSELGLKAKEIMDAGKLV. AMP is bound by residues Thr31, Arg36, 57–59, 85–88, and Gln92; these read KLV and GFPR. Residues 122–159 form an LID region; sequence GRRVHAPSGRVYHVTFNPPRVEGKDDMTGEELTTRKDD. Residues Arg123 and 132–133 each bind ATP; that span reads VY. 2 residues coordinate AMP: Arg156 and Arg167. Arg200 serves as a coordination point for ATP.

The protein belongs to the adenylate kinase family. As to quaternary structure, monomer.

It is found in the cytoplasm. It catalyses the reaction AMP + ATP = 2 ADP. It functions in the pathway purine metabolism; AMP biosynthesis via salvage pathway; AMP from ADP: step 1/1. In terms of biological role, catalyzes the reversible transfer of the terminal phosphate group between ATP and AMP. Plays an important role in cellular energy homeostasis and in adenine nucleotide metabolism. This chain is Adenylate kinase, found in Erwinia tasmaniensis (strain DSM 17950 / CFBP 7177 / CIP 109463 / NCPPB 4357 / Et1/99).